The primary structure comprises 388 residues: Succinate--CoA ligase [ADP-forming] subunit beta (388 aa).

The ATP-grasp domain maps to 9-244; it reads KQLFKEFGLP…PSQDDAREAE (236 aa). ATP contacts are provided by residues Lys46, 53 to 55, Glu99, Thr102, and Glu107; that span reads GRG. Residues Asn199 and Asp213 each coordinate Mg(2+). Substrate-binding positions include Asn264 and 321 to 323; that span reads GIV.

Belongs to the succinate/malate CoA ligase beta subunit family. Heterotetramer of two alpha and two beta subunits. The cofactor is Mg(2+).

The enzyme catalyses succinate + ATP + CoA = succinyl-CoA + ADP + phosphate. It catalyses the reaction GTP + succinate + CoA = succinyl-CoA + GDP + phosphate. The protein operates within carbohydrate metabolism; tricarboxylic acid cycle; succinate from succinyl-CoA (ligase route): step 1/1. Functionally, succinyl-CoA synthetase functions in the citric acid cycle (TCA), coupling the hydrolysis of succinyl-CoA to the synthesis of either ATP or GTP and thus represents the only step of substrate-level phosphorylation in the TCA. The beta subunit provides nucleotide specificity of the enzyme and binds the substrate succinate, while the binding sites for coenzyme A and phosphate are found in the alpha subunit. In Idiomarina loihiensis (strain ATCC BAA-735 / DSM 15497 / L2-TR), this protein is Succinate--CoA ligase [ADP-forming] subunit beta.